Consider the following 191-residue polypeptide: Probable rho GDP-dissociation inhibitor (191 aa).

Positions 1-22 (MSDHENTGENTSEYQYKQPPQK) are disordered. Over residues 8-21 (GENTSEYQYKQPPQ) the composition is skewed to polar residues.

Belongs to the Rho GDI family.

It localises to the cytoplasm. Regulates the GDP/GTP exchange reaction of the Rho proteins by inhibiting the dissociation of GDP from them, and the subsequent binding of GTP to them. This is Probable rho GDP-dissociation inhibitor (rhi-1) from Caenorhabditis elegans.